The following is a 216-amino-acid chain: Peroxiredoxin (216 aa).

The Thioredoxin domain maps to 2-158 (VVIGEKFPEV…ILRLVKALKI (157 aa)). Cys-46 (cysteine sulfenic acid (-SOH) intermediate) is an active-site residue. Residue Arg-121 participates in substrate binding. A disulfide bridge links Cys-205 with Cys-211.

It belongs to the peroxiredoxin family. Prx6 subfamily. As to quaternary structure, homodecamer. Pentamer of dimers that assemble into a ring structure.

The protein localises to the cytoplasm. The enzyme catalyses a hydroperoxide + [thioredoxin]-dithiol = an alcohol + [thioredoxin]-disulfide + H2O. Thiol-specific peroxidase that catalyzes the reduction of hydrogen peroxide and organic hydroperoxides to water and alcohols, respectively. Plays a role in cell protection against oxidative stress by detoxifying peroxides. The polypeptide is Peroxiredoxin (Pyrococcus abyssi (strain GE5 / Orsay)).